Reading from the N-terminus, the 472-residue chain is Ras-GEF domain-containing family member 1B (472 aa).

In terms of domain architecture, N-terminal Ras-GEF spans 34–164 (HDNNLLSGSL…MMQCLIRKLA (131 aa)). Residues 204–452 (DPYTLAQQLT…YLASYESEGP (249 aa)) enclose the Ras-GEF domain.

In terms of assembly, interacts with CCDC124 during cytokinesis. Interacts with Ras family proteins.

It is found in the early endosome. The protein localises to the late endosome. The protein resides in the midbody. In terms of biological role, guanine nucleotide exchange factor (GEF) with specificity for RAP2A, it doesn't seems to activate other Ras family proteins (in vitro). The chain is Ras-GEF domain-containing family member 1B (RASGEF1B) from Pongo abelii (Sumatran orangutan).